The chain runs to 240 residues: MTTNPKPIYQRILLKLSGEALQGSEGFGIDAKVLDRMAQEVKELVELGVQVGLVIGGGNLFRGAGLAEAGMNRVVGDHMGMLATVMNGLAMRDALHRAYVNARVMSAIPLNGVCDSYNWAEAISQLRQGRVVIFAAGTGNPFFTTDSAACLRGIEIEADIVLKATKVDGVYTDDPVKNPDAVLCDKLGFQDVLEKELKVMDLAAFTLARDHKMPIRVFNMTKPGSLRRVVMGEQEGTLIS.

15 to 18 (KLSG) serves as a coordination point for ATP. Positions 23-28 (GSEGFG) are involved in allosteric activation by GTP. Residue Gly57 participates in UMP binding. ATP is bound by residues Gly58 and Arg62. Residues Asp77 and 138 to 145 (TGNPFFTT) contribute to the UMP site. Thr165, Tyr171, and Asp174 together coordinate ATP.

It belongs to the UMP kinase family. Homohexamer.

It is found in the cytoplasm. It carries out the reaction UMP + ATP = UDP + ADP. The protein operates within pyrimidine metabolism; CTP biosynthesis via de novo pathway; UDP from UMP (UMPK route): step 1/1. With respect to regulation, allosterically activated by GTP. Inhibited by UTP. Catalyzes the reversible phosphorylation of UMP to UDP. This is Uridylate kinase from Photobacterium profundum (strain SS9).